The following is a 153-amino-acid chain: Bkd operon transcriptional regulator (153 aa).

Positions 4–65 constitute an HTH asnC-type domain; sequence LDRIDLKILR…RLDEERLSGA (62 aa). The segment at residues 23–42 is a DNA-binding region (H-T-H motif); that stretch reads WRDLAQKVGLSLTPTLRRVR.

Functionally, positive regulator of the bkd operon for branched-chain keto acid dehydrogenase complex. The sequence is that of Bkd operon transcriptional regulator (bkdR) from Pseudomonas aeruginosa (strain ATCC 15692 / DSM 22644 / CIP 104116 / JCM 14847 / LMG 12228 / 1C / PRS 101 / PAO1).